Consider the following 530-residue polypeptide: UDP-glucuronosyltransferase 1A10 (530 aa).

The N-terminal stretch at 1-25 (MARAGWTSPVPLCVCLLLTCGFAEA) is a signal peptide. N-linked (GlcNAc...) asparagine glycosylation is found at Asn-71, Asn-292, and Asn-344. The helical transmembrane segment at 488–504 (VIGFLLAVVLTVAFITF) threads the bilayer.

Belongs to the UDP-glycosyltransferase family. Homodimer. Homooligomer. Interacts with UGT1A1, UGT1A3, UGT1A4, UGT1A6, UGT1A7, UGT1A8 and UGT1A9 to form heterodimers. Isoform 1 interacts with isoform 2/i2 suggesting that oligomerization is involved in negative regulation of transferase activity by isoform 2. Isoform 1 also interacts with respective i2 isoforms of UGT1A1, UGT1A3, UGT1A4, UGT1A6, UGT1A7, UGT1A8 and UGT1A9. As to expression, liver and colon. Isoform 1 and isoform 2 are expressed in colon, esophagus and small intestine; isoform 2 but not isoform 1 is expressed in liver or kidney.

It localises to the endoplasmic reticulum membrane. The enzyme catalyses glucuronate acceptor + UDP-alpha-D-glucuronate = acceptor beta-D-glucuronoside + UDP + H(+). It catalyses the reaction 17beta-estradiol + UDP-alpha-D-glucuronate = 17beta-estradiol 3-O-(beta-D-glucuronate) + UDP + H(+). It carries out the reaction 17beta-estradiol + UDP-alpha-D-glucuronate = 17beta-estradiol 17-O-(beta-D-glucuronate) + UDP + H(+). The catalysed reaction is 17alpha-estradiol + UDP-alpha-D-glucuronate = 17alpha-estradiol 3-O-(beta-D-glucuronate) + UDP + H(+). The enzyme catalyses 16alpha,17beta-estriol + UDP-alpha-D-glucuronate = 16alpha,17beta-estriol 3-O-(beta-D-glucuronate) + UDP + H(+). It catalyses the reaction 16beta,17beta-estriol + UDP-alpha-D-glucuronate = 16beta,17beta-estriol 3-O-(beta-D-glucuronate) + UDP + H(+). It carries out the reaction 16alpha,17alpha-estriol + UDP-alpha-D-glucuronate = 16alpha,17alpha-estriol 3-O-(beta-D-glucuronate) + UDP + H(+). The catalysed reaction is 16alpha-hydroxyestrone + UDP-alpha-D-glucuronate = 16alpha-hydroxyestrone 3-O-(beta-D-glucuronate) + UDP + H(+). The enzyme catalyses estrone + UDP-alpha-D-glucuronate = estrone 3-O-(beta-D-glucuronate) + UDP + H(+). It catalyses the reaction prunetin + UDP-alpha-D-glucuronate = prunetin-4'-O-beta-D-glucuronide + UDP. It carries out the reaction (5Z,8Z,11Z,14Z)-eicosatetraenoate + UDP-alpha-D-glucuronate = O-[(5Z),(8Z),(11Z),(14Z)-eicosatetraenoyl]-beta-D-glucuronate + UDP. The catalysed reaction is 15-hydroxy-(5Z,8Z,11Z,13E)-eicosatetraenoate + UDP-alpha-D-glucuronate = 15-O-(beta-D-glucuronosyl)-(5Z,8Z,11Z,14Z)-eicosatetraenoate + UDP + H(+). The enzyme catalyses prostaglandin B1 + UDP-alpha-D-glucuronate = 15-O-(beta-D-glucuronosyl)-prostaglandin B1 + UDP + H(+). It catalyses the reaction (E)-ferulate + UDP-alpha-D-glucuronate = (E)-4-O-(beta-D-glucuronosyl)-ferulate + UDP + H(+). It carries out the reaction (E)-ferulate + UDP-alpha-D-glucuronate = (E)-ferulic acid beta-D-glucuronate ester + UDP. The catalysed reaction is losartan + UDP-alpha-D-glucuronate = losartan-2-N-beta-D-glucuronide + UDP. The enzyme catalyses candesartan + UDP-alpha-D-glucuronate = candesartan O-beta-D-glucuronoside + UDP. It catalyses the reaction candesartan + UDP-alpha-D-glucuronate = candesartan-2-N-beta-D-glucuronide + UDP. It carries out the reaction zolasartan + UDP-alpha-D-glucuronate = zolarsartan-1-N-beta-D-glucuronide + UDP. In terms of biological role, UDP-glucuronosyltransferase (UGT) that catalyzes phase II biotransformation reactions in which lipophilic substrates are conjugated with glucuronic acid to increase the metabolite's water solubility, thereby facilitating excretion into either the urine or bile. Essential for the elimination and detoxification of drugs, xenobiotics and endogenous compounds. Catalyzes the glucuronidation of endogenous estrogen hormones such as estradiol, estrone and estriol. Involved in the glucuronidation of arachidonic acid (AA) and AA-derived eicosanoids including 15-HETE and PGB1. Involved in the glucuronidation of the phytochemical ferulic acid at the phenolic or the carboxylic acid group. Also catalyzes the glucuronidation of the isoflavones genistein, daidzein, glycitein, formononetin, biochanin A and prunetin, which are phytoestrogens with anticancer and cardiovascular properties. Involved in the glucuronidation of the AGTR1 angiotensin receptor antagonist losartan, caderastan and zolarsatan, drugs which can inhibit the effect of angiotensin II. Functionally, lacks UGT glucuronidation activity but acts as a negative regulator of isoform 1. The chain is UDP-glucuronosyltransferase 1A10 from Homo sapiens (Human).